The following is a 319-amino-acid chain: Acetyl-coenzyme A carboxylase carboxyl transferase subunit alpha (319 aa).

One can recognise a CoA carboxyltransferase C-terminal domain in the interval 39 to 293 (KLEQKAAQLL…GDAIAEELKG (255 aa)).

It belongs to the AccA family. As to quaternary structure, acetyl-CoA carboxylase is a heterohexamer composed of biotin carboxyl carrier protein (AccB), biotin carboxylase (AccC) and two subunits each of ACCase subunit alpha (AccA) and ACCase subunit beta (AccD).

The protein resides in the cytoplasm. The catalysed reaction is N(6)-carboxybiotinyl-L-lysyl-[protein] + acetyl-CoA = N(6)-biotinyl-L-lysyl-[protein] + malonyl-CoA. Its pathway is lipid metabolism; malonyl-CoA biosynthesis; malonyl-CoA from acetyl-CoA: step 1/1. Functionally, component of the acetyl coenzyme A carboxylase (ACC) complex. First, biotin carboxylase catalyzes the carboxylation of biotin on its carrier protein (BCCP) and then the CO(2) group is transferred by the carboxyltransferase to acetyl-CoA to form malonyl-CoA. This Parvibaculum lavamentivorans (strain DS-1 / DSM 13023 / NCIMB 13966) protein is Acetyl-coenzyme A carboxylase carboxyl transferase subunit alpha.